The primary structure comprises 197 residues: Phospholipid hydroperoxide glutathione peroxidase (197 aa).

Phosphoserine is present on Ser40. The active site involves Sec73. A non-standard amino acid (selenocysteine) is located at residue Sec73.

It belongs to the glutathione peroxidase family. As to quaternary structure, monomer. Has a tendency to form higher mass oligomers. Interacts with FUNDC1; this interaction promotes GPX4 recruitment into mitochondria through TOM/TIM complex where it is degraded by mitophagy.

The protein resides in the mitochondrion. Its subcellular location is the cytoplasm. It carries out the reaction a hydroperoxy polyunsaturated fatty acid + 2 glutathione = a hydroxy polyunsaturated fatty acid + glutathione disulfide + H2O. It catalyses the reaction 2 glutathione + H2O2 = glutathione disulfide + 2 H2O. The catalysed reaction is tert-butyl hydroperoxide + 2 glutathione = tert-butanol + glutathione disulfide + H2O. The enzyme catalyses cumene hydroperoxide + 2 glutathione = 2-phenylpropan-2-ol + glutathione disulfide + H2O. It carries out the reaction (9S)-hydroperoxy-(10E,12Z)-octadecadienoate + 2 glutathione = (9S)-hydroxy-(10E,12Z)-octadecadienoate + glutathione disulfide + H2O. It catalyses the reaction (13S)-hydroperoxy-(9Z,11E)-octadecadienoate + 2 glutathione = (13S)-hydroxy-(9Z,11E)-octadecadienoate + glutathione disulfide + H2O. The catalysed reaction is (5S)-hydroperoxy-(6E,8Z,11Z,14Z)-eicosatetraenoate + 2 glutathione = (5S)-hydroxy-(6E,8Z,11Z,14Z)-eicosatetraenoate + glutathione disulfide + H2O. The enzyme catalyses (12R)-hydroperoxy-(5Z,8Z,10E,14Z)-eicosatetraenoate + 2 glutathione = (12R)-hydroxy-(5Z,8Z,10E,14Z)-eicosatetraenoate + glutathione disulfide + H2O. It carries out the reaction (12S)-hydroperoxy-(5Z,8Z,10E,14Z)-eicosatetraenoate + 2 glutathione = (12S)-hydroxy-(5Z,8Z,10E,14Z)-eicosatetraenoate + glutathione disulfide + H2O. It catalyses the reaction (15S)-hydroperoxy-(5Z,8Z,11Z,13E)-eicosatetraenoate + 2 glutathione = (15S)-hydroxy-(5Z,8Z,11Z,13E)-eicosatetraenoate + glutathione disulfide + H2O. The catalysed reaction is (5S)-hydroperoxy-(6E,8Z,11Z,14Z,17Z)-eicosapentaenoate + 2 glutathione = (5S)-hydroxy-(6E,8Z,11Z,14Z,17Z)-eicosapentaenoate + glutathione disulfide + H2O. The enzyme catalyses (12S)-hydroperoxy-(5Z,8Z,10E,14Z,17Z)-eicosapentaenoate + 2 glutathione = (12S)-hydroxy-(5Z,8Z,10E,14Z,17Z)-eicosapentaenoate + glutathione disulfide + H2O. It carries out the reaction (15S)-hydroperoxy-(5Z,8Z,11Z,13E,17Z)-eicosapentaenoate + 2 glutathione = (15S)-hydroxy-(5Z,8Z,11Z,13E,17Z)-eicosapentaenoate + glutathione disulfide + H2O. It catalyses the reaction (15S)-hydroperoxy-(11Z,13E)-eicosadienoate + 2 glutathione = (15S)-hydroxy-(11Z,13E)-eicosadienoate + glutathione disulfide + H2O. The catalysed reaction is (17S)-hydroperoxy-(4Z,7Z,10Z,13Z,15E,19Z)-docosahexaenoate + 2 glutathione = (17S)-hydroxy-(4Z,7Z,10Z,13Z,15E,19Z)-docosahexaenoate + glutathione disulfide + H2O. The enzyme catalyses a hydroperoxy-1,2-diacyl-glycero-3-phosphocholine + 2 glutathione = a hydroxy-1,2-diacyl-glycero-3-phosphocholine + glutathione disulfide + H2O. Functionally, essential antioxidant peroxidase that directly reduces phospholipid hydroperoxide even if they are incorporated in membranes and lipoproteins. Can also reduce fatty acid hydroperoxide, cholesterol hydroperoxide and thymine hydroperoxide. Plays a key role in protecting cells from oxidative damage by preventing membrane lipid peroxidation. Required to prevent cells from ferroptosis, a non-apoptotic cell death resulting from an iron-dependent accumulation of lipid reactive oxygen species. The presence of selenocysteine (Sec) versus Cys at the active site is essential for life: it provides resistance to overoxidation and prevents cells against ferroptosis. The presence of Sec at the active site is also essential for the survival of a specific type of parvalbumin-positive interneurons, thereby preventing against fatal epileptic seizures. May be required to protect cells from the toxicity of ingested lipid hydroperoxides. Required for normal sperm development and male fertility. Essential for maturation and survival of photoreceptor cells. Plays a role in a primary T-cell response to viral and parasitic infection by protecting T-cells from ferroptosis and by supporting T-cell expansion. Plays a role of glutathione peroxidase in platelets in the arachidonic acid metabolism. Reduces hydroperoxy ester lipids formed by a 15-lipoxygenase that may play a role as down-regulator of the cellular 15-lipoxygenase pathway. Can also reduce small soluble hydroperoxides such as H2O2, cumene hydroperoxide and tert-butyl hydroperoxide. The sequence is that of Phospholipid hydroperoxide glutathione peroxidase from Hylobates lar (Lar gibbon).